Consider the following 542-residue polypeptide: Putative cysteine ligase BshC (542 aa).

A coiled-coil region spans residues 458–479 (LTKNATLLQAQIDFLHQTLQRA).

This sequence belongs to the BshC family.

Functionally, involved in bacillithiol (BSH) biosynthesis. May catalyze the last step of the pathway, the addition of cysteine to glucosamine malate (GlcN-Mal) to generate BSH. In Geobacillus sp. (strain WCH70), this protein is Putative cysteine ligase BshC.